The chain runs to 618 residues: Proline--tRNA ligase (618 aa).

The protein belongs to the class-II aminoacyl-tRNA synthetase family. ProS type 1 subfamily. In terms of assembly, homodimer.

Its subcellular location is the cytoplasm. The enzyme catalyses tRNA(Pro) + L-proline + ATP = L-prolyl-tRNA(Pro) + AMP + diphosphate. Catalyzes the attachment of proline to tRNA(Pro) in a two-step reaction: proline is first activated by ATP to form Pro-AMP and then transferred to the acceptor end of tRNA(Pro). As ProRS can inadvertently accommodate and process non-cognate amino acids such as alanine and cysteine, to avoid such errors it has two additional distinct editing activities against alanine. One activity is designated as 'pretransfer' editing and involves the tRNA(Pro)-independent hydrolysis of activated Ala-AMP. The other activity is designated 'posttransfer' editing and involves deacylation of mischarged Ala-tRNA(Pro). The misacylated Cys-tRNA(Pro) is not edited by ProRS. The sequence is that of Proline--tRNA ligase from Streptococcus equi subsp. equi (strain 4047).